The following is a 145-amino-acid chain: 3-hydroxyacyl-[acyl-carrier-protein] dehydratase FabZ (145 aa).

Residue H48 is part of the active site.

It belongs to the thioester dehydratase family. FabZ subfamily.

The protein localises to the cytoplasm. It carries out the reaction a (3R)-hydroxyacyl-[ACP] = a (2E)-enoyl-[ACP] + H2O. In terms of biological role, involved in unsaturated fatty acids biosynthesis. Catalyzes the dehydration of short chain beta-hydroxyacyl-ACPs and long chain saturated and unsaturated beta-hydroxyacyl-ACPs. In Marinobacter nauticus (strain ATCC 700491 / DSM 11845 / VT8) (Marinobacter aquaeolei), this protein is 3-hydroxyacyl-[acyl-carrier-protein] dehydratase FabZ.